The following is a 327-amino-acid chain: Malate dehydrogenase (327 aa).

11–17 (GAAGNIS) is a binding site for NAD(+). Residues Arg-92 and Arg-98 each contribute to the substrate site. NAD(+) contacts are provided by residues Asn-105, Gln-112, and 129–131 (VGN). 2 residues coordinate substrate: Asn-131 and Arg-162. Residue His-187 is the Proton acceptor of the active site. Positions 304 to 327 (SQEKMKATEQELSEERDAVEHLLP) are disordered.

It belongs to the LDH/MDH superfamily. MDH type 2 family.

The enzyme catalyses (S)-malate + NAD(+) = oxaloacetate + NADH + H(+). Catalyzes the reversible oxidation of malate to oxaloacetate. This is Malate dehydrogenase from Psychrobacter sp. (strain PRwf-1).